Here is a 381-residue protein sequence, read N- to C-terminus: tRNA pseudouridine synthase D (381 aa).

Aspartate 81 (nucleophile) is an active-site residue. In terms of domain architecture, TRUD spans 160-335 (GMPNYFGPQR…TLGSRRFFWV (176 aa)).

Belongs to the pseudouridine synthase TruD family.

It carries out the reaction uridine(13) in tRNA = pseudouridine(13) in tRNA. Its function is as follows. Responsible for synthesis of pseudouridine from uracil-13 in transfer RNAs. This is tRNA pseudouridine synthase D from Helicobacter pylori (strain Shi470).